The sequence spans 129 residues: Fluoride-specific ion channel FluC 2 (129 aa).

The next 4 membrane-spanning stretches (helical) occupy residues 3-23 (FLYV…MNLW), 32-52 (ATLA…RFLA), 59-79 (LVLL…FSAF), and 90-110 (GAWL…LIMV). 2 residues coordinate Na(+): Gly71 and Thr74.

Belongs to the fluoride channel Fluc/FEX (TC 1.A.43) family.

Its subcellular location is the cell membrane. The catalysed reaction is fluoride(in) = fluoride(out). Na(+) is not transported, but it plays an essential structural role and its presence is essential for fluoride channel function. Fluoride-specific ion channel. Important for reducing fluoride concentration in the cell, thus reducing its toxicity. The protein is Fluoride-specific ion channel FluC 2 of Listeria monocytogenes serovar 1/2a (strain ATCC BAA-679 / EGD-e).